A 221-amino-acid polypeptide reads, in one-letter code: uncharacterized protein (221 aa).

The Peptidase S8 domain maps to 1-189; the sequence is MDSGKDTNGY…NVVYCSEKAV (189 aa).

Belongs to the peptidase S8 family.

This is an uncharacterized protein from Aquifex aeolicus (strain VF5).